Consider the following 389-residue polypeptide: Gastricsin (389 aa).

Residues 1–16 form the signal peptide; the sequence is MKWMVVVLLCLQLLEA. Positions 17–59 are cleaved as a propeptide — activation peptide; that stretch reads KVVKVPLKKLKSLRETMKEKGLLEEFLKNHKYDPAQKYRYTDF. The Peptidase A1 domain occupies 73 to 386; the sequence is YFGEISIGTP…DMGNNRVGFA (314 aa). Asp91 is an active-site residue. Disulfide bonds link Cys104–Cys109 and Cys268–Cys272. Residue Asp277 is part of the active site. Cys311 and Cys344 are oxidised to a cystine.

It belongs to the peptidase A1 family.

It localises to the secreted. It carries out the reaction More restricted specificity than pepsin A, but shows preferential cleavage at Tyr-|-Xaa bonds. High activity on hemoglobin.. Its function is as follows. Hydrolyzes a variety of proteins. The protein is Gastricsin (PGC) of Rhinolophus ferrumequinum (Greater horseshoe bat).